The primary structure comprises 83 residues: Arminin 3b (83 aa).

The signal sequence occupies residues 1-18; that stretch reads MKIVFAILFLTFIALTYA. A propeptide spanning residues 19-57 is cleaved from the precursor; that stretch reads RSFEDLKEEIKNEIEKEIFDDLEEESDELDNNVKKFNDA. S80 is modified (serine amide).

This sequence belongs to the arminin family. Expressed in entodermal epithelium along the body column.

The protein localises to the secreted. It localises to the target cell membrane. Antimicrobial peptide with a broad-spectrum antimicrobial activity. Keeps its antibacterial activity under a wide range of salt concentrations that mimic physiological conditions of human blood, which is surprising, since Hydra is an obligate freshwater animal with nearly no salt tolerance. Does not affect red blood cells. This chain is Arminin 3b, found in Hydra vulgaris (Hydra).